The sequence spans 322 residues: MNISTLQLILETFSFFIYFILTFLFFAQAIFKNHWLKTFNFSGMLIANVSIFLLLITRWITAGYFPISNLYESLFFLVWGLNTIWLFLYKNNMRIQLLDNSVSLLLTLLVGFLHFILPQEMREISPLVPALKSNWLMMHVSVMMISYATLMIGSLLSIIYLYFLYRVDKLLNKINAVNLMTSNQNSNSLIYNLSFNTLLNSSKSMEYQILLKDLSLIKLSKRLDNLSYRLITFGFPLLTIGIIAGAVWANEAWGSYWSWDPKETWALITWLIFAIYLHTRIIKGWQGKKAAMVASLGFFIIWICYLGVNLLGKGIHSYGWFF.

The next 8 membrane-spanning stretches (helical) occupy residues 6–26 (LQLI…FLFF), 45–65 (LIAN…AGYF), 69–89 (NLYE…LFLY), 97–117 (LLDN…HFIL), 144–164 (MISY…LYFL), 230–250 (LITF…VWAN), 265–285 (WALI…IKGW), and 291–311 (AMVA…VNLL).

This sequence belongs to the CcmF/CycK/Ccl1/NrfE/CcsA family. As to quaternary structure, may interact with Ccs1.

It is found in the plastid. Its subcellular location is the cyanelle thylakoid membrane. Functionally, required during biogenesis of c-type cytochromes (cytochrome c6 and cytochrome f) at the step of heme attachment. The protein is Cytochrome c biogenesis protein CcsA of Cyanophora paradoxa.